The chain runs to 278 residues: Putative ABC transporter ATP-binding protein MJ1572 (278 aa).

The ABC transporter domain maps to 5–242 (YRLVDVSYKY…LDELNLDVPE (238 aa)). 38–45 (GPNGAGKT) lines the ATP pocket.

It belongs to the ABC transporter superfamily.

The protein localises to the cell membrane. Its function is as follows. Probably part of an ABC transporter complex. Responsible for energy coupling to the transport system. This is Putative ABC transporter ATP-binding protein MJ1572 from Methanocaldococcus jannaschii (strain ATCC 43067 / DSM 2661 / JAL-1 / JCM 10045 / NBRC 100440) (Methanococcus jannaschii).